The primary structure comprises 431 residues: Glucose-1-phosphate adenylyltransferase (431 aa).

Alpha-D-glucose 1-phosphate is bound by residues Gly163, 178–179 (EK), and Ser210.

Belongs to the bacterial/plant glucose-1-phosphate adenylyltransferase family. As to quaternary structure, homotetramer.

It catalyses the reaction alpha-D-glucose 1-phosphate + ATP + H(+) = ADP-alpha-D-glucose + diphosphate. It functions in the pathway glycan biosynthesis; glycogen biosynthesis. Involved in the biosynthesis of ADP-glucose, a building block required for the elongation reactions to produce glycogen. Catalyzes the reaction between ATP and alpha-D-glucose 1-phosphate (G1P) to produce pyrophosphate and ADP-Glc. The protein is Glucose-1-phosphate adenylyltransferase of Synechococcus sp. (strain WH7803).